Here is a 120-residue protein sequence, read N- to C-terminus: Ribosome-binding factor A (120 aa).

This sequence belongs to the RbfA family. As to quaternary structure, monomer. Binds 30S ribosomal subunits, but not 50S ribosomal subunits or 70S ribosomes.

The protein resides in the cytoplasm. Its function is as follows. One of several proteins that assist in the late maturation steps of the functional core of the 30S ribosomal subunit. Associates with free 30S ribosomal subunits (but not with 30S subunits that are part of 70S ribosomes or polysomes). Required for efficient processing of 16S rRNA. May interact with the 5'-terminal helix region of 16S rRNA. The sequence is that of Ribosome-binding factor A from Borrelia garinii subsp. bavariensis (strain ATCC BAA-2496 / DSM 23469 / PBi) (Borreliella bavariensis).